Consider the following 291-residue polypeptide: MMTQSIRRSMLTVMATLPLLFSSATLHAQANSVQQQLEALEKSSGGRLGVAQINTADNSQILYVADERFAMCSTSKVMAAAAVLKQSESDKHLLNQRVEIRASDLVNYNPIAEKHVNGTMTLAELGAGALQYSDNTAMNKLIAHLGGPDKVTAFARSLGDETFRLDRTEPTLNSAIPGDPRDTTTPLAMAQTLKNLTLGKALAETQRAQLVTWLKGNTTGSASIRAGMPKSWGVGDKTGSGDYGTTNDIAVIWPENHAPLVLVTYFTQPEQKAESRRDILAAAAKIVTHGF.

Residues 1–28 form the signal peptide; it reads MMTQSIRRSMLTVMATLPLLFSSATLHA. The Acyl-ester intermediate role is filled by Ser73. Substrate is bound at residue 237 to 239; the sequence is KTG.

Belongs to the class-A beta-lactamase family.

It carries out the reaction a beta-lactam + H2O = a substituted beta-amino acid. In terms of biological role, has cefotaxime-hydrolyzing activity. In Salmonella typhimurium, this protein is Beta-lactamase CTX-M-4 (bla).